The chain runs to 622 residues: DNA mismatch repair protein MutL (622 aa).

It belongs to the DNA mismatch repair MutL/HexB family.

Its function is as follows. This protein is involved in the repair of mismatches in DNA. It is required for dam-dependent methyl-directed DNA mismatch repair. May act as a 'molecular matchmaker', a protein that promotes the formation of a stable complex between two or more DNA-binding proteins in an ATP-dependent manner without itself being part of a final effector complex. This is DNA mismatch repair protein MutL from Clostridium acetobutylicum (strain ATCC 824 / DSM 792 / JCM 1419 / IAM 19013 / LMG 5710 / NBRC 13948 / NRRL B-527 / VKM B-1787 / 2291 / W).